The chain runs to 646 residues: FAD-binding monooxygenase prhK (646 aa).

Residue Asn-46 is glycosylated (N-linked (GlcNAc...) asparagine). The chain crosses the membrane as a helical span at residues 80-97 (IIIIGAGFGGLLFAVRLI). Residues 119 to 122 (TWYW), 131 to 132 (DT), and Tyr-137 contribute to the FAD site. 129–131 (MCD) contacts NADP(+). NADP(+) contacts are provided by residues 275 to 281 (TGATAIQ) and 298 to 299 (RT). N-linked (GlcNAc...) asparagine glycans are attached at residues Asn-429, Asn-483, and Asn-529.

The protein belongs to the FAD-binding monooxygenase family. Requires FAD as cofactor.

The protein localises to the membrane. The enzyme catalyses preaustinoid A + AH2 + O2 = preaustinoid A1 + A + H2O. It participates in secondary metabolite biosynthesis; terpenoid biosynthesis. In terms of biological role, FAD-binding monooxygenase; part of the gene cluster that mediates the biosynthesis of paraherquonin, a meroterpenoid with a unique, highly congested hexacyclic molecular architecture. The first step of the pathway is the synthesis of 3,5-dimethylorsellinic acid (DMOA) by the polyketide synthase prhL. Synthesis of DMOA is followed by farnesylation by the prenyltransferase prhE, methylesterification by the methyl-transferase prhM, epoxidation of the prenyl chain by the flavin-dependent monooxygenase prhF, and cyclization of the farnesyl moiety by the terpene cyclase prhH, to yield the tetracyclic intermediate, protoaustinoid A. The short chain dehydrogenase prhI then oxidizes the C-3 alcohol group of the terpene cyclase product to transform protoaustinoid A into protoaustinoid B. The FAD-binding monooxygenase prhJ catalyzes the oxidation of protoaustinoid B into preaustinoid A which is further oxidized into preaustinoid A1 by FAD-binding monooxygenase phrK. Finally, prhA leads to berkeleydione via the berkeleyone B intermediate. PrhA is a multifunctional dioxygenase that first desaturates at C5-C6 to form berkeleyone B, followed by rearrangement of the A/B-ring to form the cycloheptadiene moiety in berkeleydione. Berkeleydione serves as the key intermediate for the biosynthesis of paraherquonin as well as many other meroterpenoids. The cytochrome P450 monooxygenases prhB, prhD, and prhN, as well as the isomerase prhC, are probably involved in the late stage of paraherquonin biosynthesis, after the production of berkeleydione. Especially prhC might be a multifunctional enzyme that catalyzes the D-ring expansion via intramolecular methoxy rearrangement, as well as the hydrolysis of the expanded D-ring. This is FAD-binding monooxygenase prhK from Penicillium brasilianum.